A 194-amino-acid chain; its full sequence is Large ribosomal subunit protein bL25 (194 aa).

This sequence belongs to the bacterial ribosomal protein bL25 family. CTC subfamily. As to quaternary structure, part of the 50S ribosomal subunit; part of the 5S rRNA/L5/L18/L25 subcomplex. Contacts the 5S rRNA. Binds to the 5S rRNA independently of L5 and L18.

Functionally, this is one of the proteins that binds to the 5S RNA in the ribosome where it forms part of the central protuberance. The protein is Large ribosomal subunit protein bL25 of Geobacter sulfurreducens (strain ATCC 51573 / DSM 12127 / PCA).